The following is a 533-amino-acid chain: Metal transporter nramp1 homolog (533 aa).

A disordered region spans residues 1–33 (MTPRIESEESAPLVNKNNNNNNDNNNNNNVDEE). Residues 1–68 (MTPRIESEES…PNIDKPDSKW (68 aa)) lie on the Cytoplasmic side of the membrane. The segment covering 14-29 (VNKNNNNNNDNNNNNN) has biased composition (low complexity). A helical membrane pass occupies residues 69 to 89 (INFKTLWAFTGPGFLMSIAYL). Topologically, residues 90–101 (DPGNLESDIQAG) are extracellular. A helical transmembrane segment spans residues 102–122 (AMAGYQLLWVLFWSTVIGFWL). Topologically, residues 123–158 (QMLASRLGVVTGKHLAEHCREQYPKTPRLLLWLMTE) are cytoplasmic. A helical transmembrane segment spans residues 159-179 (LAIIGSDIQEVIGTAIALQIL). At 180–182 (SNG) the chain is on the extracellular side. A helical transmembrane segment spans residues 183 to 203 (HIPLWAGVLFTAADTFTFLFL). Over 204 to 212 (EKYGIRKLE) the chain is Cytoplasmic. A helical transmembrane segment spans residues 213-233 (AFFCSLIAIMAISFGVEYIIS). The Extracellular portion of the chain corresponds to 234 to 256 (KPDQIEVVKGVFIPLCSQNNISQ). Asparagine 253 is a glycosylation site (N-linked (GlcNAc...) asparagine). A helical transmembrane segment spans residues 257–277 (AVGILGAVVMPHNIYLHSALV). Over 278–302 (QSREIDRKSETQVKIANKYNRLESA) the chain is Cytoplasmic. A helical transmembrane segment spans residues 303-323 (FALIISFIINLLLVSVFAKGF). Residues 324–348 (YGETTEIGLSSAADFLMDKYGKVAK) are Extracellular-facing. The chain crosses the membrane as a helical span at residues 349-368 (YIWAIGLFSAGQCSTMTGTY). Topologically, residues 369 to 387 (SGQFVMEGFLKLKIAPWKR) are cytoplasmic. Residues 388–408 (LLITRCTAIVPAMVVAILSTS) traverse the membrane as a helical segment. The Extracellular segment spans residues 409-415 (HLDSLDQ). A helical membrane pass occupies residues 416–436 (WLNILQSIQLPFAVVPVLLFT). The Cytoplasmic portion of the chain corresponds to 437–457 (SSEKIMGSKFKNHWLNNQFVR). A helical transmembrane segment spans residues 458 to 478 (FLSLLIIAINIYLIITFSMQI). At 479–481 (SES) the chain is on the extracellular side. A helical transmembrane segment spans residues 482–502 (AWMISIVSISFFFYFIFIVYL). Residues 503 to 533 (SMGQENFNSMTKKIKNLFNNNSNQTYNNINY) lie on the Cytoplasmic side of the membrane.

The protein belongs to the NRAMP family.

The protein resides in the membrane. Depletes iron from the phagolysosome in an ATP-dependent process. May rather act as a symporter of protons and metal cations in an ATP-dependent process. Nramp1 overexpression protected cells from L.pneumophila infection. The sequence is that of Metal transporter nramp1 homolog (nramp1) from Dictyostelium discoideum (Social amoeba).